A 70-amino-acid polypeptide reads, in one-letter code: MARPEISEVTKLTDDDLKNKIDEIRKELFDLRFKRATRQLSETHRFKEARIQLAQLLTVQGDRNRSKTSS.

It belongs to the universal ribosomal protein uL29 family.

In Prochlorococcus marinus (strain MIT 9211), this protein is Large ribosomal subunit protein uL29.